The chain runs to 350 residues: Probable dual-specificity RNA methyltransferase RlmN (350 aa).

Residues 105–342 enclose the Radical SAM core domain; that stretch reads ANGKNSVCIS…VRQSKGANIN (238 aa). An intrachain disulfide couples cysteine 112 to cysteine 345. [4Fe-4S] cluster contacts are provided by cysteine 119, cysteine 123, and cysteine 126. Residues 166-167, serine 198, 221-223, and asparagine 302 contribute to the S-adenosyl-L-methionine site; these read GE and SLH. Cysteine 345 acts as the S-methylcysteine intermediate in catalysis.

The protein belongs to the radical SAM superfamily. RlmN family. Requires [4Fe-4S] cluster as cofactor.

It localises to the cytoplasm. The catalysed reaction is adenosine(2503) in 23S rRNA + 2 reduced [2Fe-2S]-[ferredoxin] + 2 S-adenosyl-L-methionine = 2-methyladenosine(2503) in 23S rRNA + 5'-deoxyadenosine + L-methionine + 2 oxidized [2Fe-2S]-[ferredoxin] + S-adenosyl-L-homocysteine. The enzyme catalyses adenosine(37) in tRNA + 2 reduced [2Fe-2S]-[ferredoxin] + 2 S-adenosyl-L-methionine = 2-methyladenosine(37) in tRNA + 5'-deoxyadenosine + L-methionine + 2 oxidized [2Fe-2S]-[ferredoxin] + S-adenosyl-L-homocysteine. Its function is as follows. Specifically methylates position 2 of adenine 2503 in 23S rRNA and position 2 of adenine 37 in tRNAs. In Endomicrobium trichonymphae, this protein is Probable dual-specificity RNA methyltransferase RlmN.